A 374-amino-acid chain; its full sequence is Biotin synthase (374 aa).

Residues 51 to 278 (NTVKVNYLVN…DTEIRIAGGR (228 aa)) form the Radical SAM core domain. [4Fe-4S] cluster contacts are provided by Cys66, Cys70, and Cys73. 4 residues coordinate [2Fe-2S] cluster: Cys110, Cys143, Cys203, and Arg273. The tract at residues 346 to 374 (IAGGTSVAGSAPDPAIRRRGAGTDVPANA) is disordered.

Belongs to the radical SAM superfamily. Biotin synthase family. Homodimer. [4Fe-4S] cluster is required as a cofactor. Requires [2Fe-2S] cluster as cofactor.

The catalysed reaction is (4R,5S)-dethiobiotin + (sulfur carrier)-SH + 2 reduced [2Fe-2S]-[ferredoxin] + 2 S-adenosyl-L-methionine = (sulfur carrier)-H + biotin + 2 5'-deoxyadenosine + 2 L-methionine + 2 oxidized [2Fe-2S]-[ferredoxin]. It participates in cofactor biosynthesis; biotin biosynthesis; biotin from 7,8-diaminononanoate: step 2/2. In terms of biological role, catalyzes the conversion of dethiobiotin (DTB) to biotin by the insertion of a sulfur atom into dethiobiotin via a radical-based mechanism. The sequence is that of Biotin synthase from Nocardioides sp. (strain ATCC BAA-499 / JS614).